The following is a 301-amino-acid chain: Probable alpha-L-glutamate ligase (301 aa).

The ATP-grasp domain maps to 104 to 287; that stretch reads LQLLSRKGVG…VAGRIVSFIE (184 aa). Residues Lys141, 178–179, Asp187, and 211–213 contribute to the ATP site; these read EF and RSN. Mg(2+) contacts are provided by Asp248, Glu260, and Asn262. The Mn(2+) site is built by Asp248, Glu260, and Asn262.

It belongs to the RimK family. Mg(2+) serves as cofactor. The cofactor is Mn(2+).

In Thioalkalivibrio sulfidiphilus (strain HL-EbGR7), this protein is Probable alpha-L-glutamate ligase.